An 86-amino-acid chain; its full sequence is UPF0213 protein OB0043 (86 aa).

Residues E3 to I80 form the GIY-YIG domain.

Belongs to the UPF0213 family.

This Oceanobacillus iheyensis (strain DSM 14371 / CIP 107618 / JCM 11309 / KCTC 3954 / HTE831) protein is UPF0213 protein OB0043.